The chain runs to 189 residues: Peptidyl-tRNA hydrolase (189 aa).

TRNA is bound at residue tyrosine 14. The Proton acceptor role is filled by histidine 19. The tRNA site is built by phenylalanine 64, asparagine 66, and asparagine 112.

This sequence belongs to the PTH family. As to quaternary structure, monomer.

The protein resides in the cytoplasm. It carries out the reaction an N-acyl-L-alpha-aminoacyl-tRNA + H2O = an N-acyl-L-amino acid + a tRNA + H(+). Its function is as follows. Hydrolyzes ribosome-free peptidyl-tRNAs (with 1 or more amino acids incorporated), which drop off the ribosome during protein synthesis, or as a result of ribosome stalling. Catalyzes the release of premature peptidyl moieties from peptidyl-tRNA molecules trapped in stalled 50S ribosomal subunits, and thus maintains levels of free tRNAs and 50S ribosomes. This is Peptidyl-tRNA hydrolase from Rhizorhabdus wittichii (strain DSM 6014 / CCUG 31198 / JCM 15750 / NBRC 105917 / EY 4224 / RW1) (Sphingomonas wittichii).